Consider the following 93-residue polypeptide: Small ribosomal subunit protein uS19 (93 aa).

Belongs to the universal ribosomal protein uS19 family.

Its function is as follows. Protein S19 forms a complex with S13 that binds strongly to the 16S ribosomal RNA. The chain is Small ribosomal subunit protein uS19 from Syntrophus aciditrophicus (strain SB).